We begin with the raw amino-acid sequence, 763 residues long: Envelope glycoprotein H (763 aa).

The first 22 residues, 1–22 (MMRYSLLCTCLFLAWWAIGGRG), serve as a signal peptide directing secretion. The Virion surface portion of the chain corresponds to 23-739 (LATPYPSTPE…RYRERTAQFI (717 aa)). The segment at 29-56 (STPEFSGSPGSRATSGSPGTPKSLSATP) is disordered. A compositionally biased stretch (polar residues) spans 31 to 54 (PEFSGSPGSRATSGSPGTPKSLSA). Residues asparagine 67, asparagine 84, asparagine 91, asparagine 112, asparagine 136, asparagine 148, asparagine 157, asparagine 241, asparagine 557, asparagine 606, asparagine 641, asparagine 659, and asparagine 721 are each glycosylated (N-linked (GlcNAc...) asparagine; by host). The tract at residues 219–283 (KDTQMLGYIT…QNERFSMVIL (65 aa)) is interaction with gL. The helical transmembrane segment at 740 to 760 (IITLFILTLMFGAFLAFKIFV) threads the bilayer. The Intravirion portion of the chain corresponds to 761–763 (YCC).

Belongs to the herpesviridae glycoprotein H family. As to quaternary structure, interacts with glycoprotein L (gL); this interaction is necessary for the correct processing and cell surface expression of gH. The heterodimer gH/gL seems to interact with gB trimers during fusion. Post-translationally, N-glycosylated, O-glycosylated, and sialylated.

It localises to the virion membrane. The protein resides in the host cell membrane. The protein localises to the host endosome membrane. In terms of biological role, the heterodimer glycoprotein H-glycoprotein L is required for the fusion of viral and plasma membranes leading to virus entry into the host cell. Following initial binding to host receptor, membrane fusion is mediated by the fusion machinery composed of gB and the heterodimer gH/gL. May also be involved in the fusion between the virion envelope and the outer nuclear membrane during virion morphogenesis. The sequence is that of Envelope glycoprotein H from Equus caballus (Horse).